A 185-amino-acid polypeptide reads, in one-letter code: Ribosome-recycling factor (185 aa).

Belongs to the RRF family.

The protein resides in the cytoplasm. In terms of biological role, responsible for the release of ribosomes from messenger RNA at the termination of protein biosynthesis. May increase the efficiency of translation by recycling ribosomes from one round of translation to another. In Haemophilus influenzae (strain ATCC 51907 / DSM 11121 / KW20 / Rd), this protein is Ribosome-recycling factor.